Reading from the N-terminus, the 187-residue chain is Flavin prenyltransferase LpdB (187 aa).

FMN is bound by residues 10–12 (GAS), S37, 88–91 (SMKT), and R123. The dimethylallyl phosphate site is built by Y153 and K169.

The protein belongs to the UbiX/PAD1 family.

The catalysed reaction is dimethylallyl phosphate + FMNH2 = prenylated FMNH2 + phosphate. Functionally, involved in tannin degradation. Flavin prenyltransferase that catalyzes the synthesis of the prenylated FMN cofactor (prenyl-FMN) for gallate decarboxylase LpdC. The prenyltransferase is metal-independent and links a dimethylallyl moiety from dimethylallyl monophosphate (DMAP) to the flavin N5 and C6 atoms of FMN. The protein is Flavin prenyltransferase LpdB of Lactiplantibacillus plantarum (strain ATCC BAA-793 / NCIMB 8826 / WCFS1) (Lactobacillus plantarum).